The following is a 400-amino-acid chain: NADH-quinone oxidoreductase subunit D (400 aa).

It belongs to the complex I 49 kDa subunit family. As to quaternary structure, NDH-1 is composed of 14 different subunits. Subunits NuoB, C, D, E, F, and G constitute the peripheral sector of the complex.

Its subcellular location is the cell inner membrane. The enzyme catalyses a quinone + NADH + 5 H(+)(in) = a quinol + NAD(+) + 4 H(+)(out). In terms of biological role, NDH-1 shuttles electrons from NADH, via FMN and iron-sulfur (Fe-S) centers, to quinones in the respiratory chain. The immediate electron acceptor for the enzyme in this species is believed to be a menaquinone. Couples the redox reaction to proton translocation (for every two electrons transferred, four hydrogen ions are translocated across the cytoplasmic membrane), and thus conserves the redox energy in a proton gradient. This is NADH-quinone oxidoreductase subunit D from Chlorobaculum tepidum (strain ATCC 49652 / DSM 12025 / NBRC 103806 / TLS) (Chlorobium tepidum).